Here is a 277-residue protein sequence, read N- to C-terminus: MIOREX complex component 2 (277 aa).

The protein belongs to the NAD(P)-dependent epimerase/dehydratase family. As to quaternary structure, associates with the mitochondrial ribosome. Component of a multi-subunit COQ enzyme complex.

The protein localises to the mitochondrion. The protein operates within cofactor biosynthesis; ubiquinone biosynthesis. Its function is as follows. Component of MIOREX complexes, large expressome-like assemblies of ribosomes with factors involved in all the steps of post-transcriptional gene expression. Component of a multi-subunit COQ enzyme complex required for coenzyme Q biosynthesis. The polypeptide is MIOREX complex component 2 (Saccharomyces cerevisiae (strain ATCC 204508 / S288c) (Baker's yeast)).